The following is a 262-amino-acid chain: E3 ubiquitin-protein ligase NEURL3 (262 aa).

Residues 17 to 173 (ALRFHAEAKG…TTKAIELLDP (157 aa)) enclose the NHR domain. The segment at 202–241 (CAICFYHAANTRLVPCGHTYFCRYCAWRVFSDTAKCPVCR) adopts an RING-type zinc-finger fold.

(Microbial infection) Interacts with hepatitis C virus protein E1; this interaction prevents E1 interaction with E2 and subsequently inhibits viral infection.

The protein resides in the cytoplasm. The enzyme catalyses S-ubiquitinyl-[E2 ubiquitin-conjugating enzyme]-L-cysteine + [acceptor protein]-L-lysine = [E2 ubiquitin-conjugating enzyme]-L-cysteine + N(6)-ubiquitinyl-[acceptor protein]-L-lysine.. It participates in protein modification; protein ubiquitination. Functionally, E3 ubiquitin-protein ligase that plays a role in various biological processes such as lung development or innate immunity. Seems to utilize UBE2E1. Promotes innate antiviral response by catalyzing 'Lys-63'-linked ubiquitination of IRF7. Also inhibits hepatitis C virus assembly by directly binding to viral E1 envelope glycoprotein to disrupt its interaction with E2. Plays an essential role in TLR4-mediated activation of MAPK pathways by promoting 'Lys-48'-linked polyubiquitination of the phosphatase DUSP1/MKP1. The chain is E3 ubiquitin-protein ligase NEURL3 (NEURL3) from Homo sapiens (Human).